The primary structure comprises 38 residues: MKVRASVKKMCRGCKIIRRNGAVMVICSTEPRHKQKQG.

The protein belongs to the bacterial ribosomal protein bL36 family.

This is Large ribosomal subunit protein bL36 from Hahella chejuensis (strain KCTC 2396).